The following is a 688-amino-acid chain: Elongation factor G (688 aa).

One can recognise a tr-type G domain in the interval 8-282 (DKFRNFGIMA…GVVDYLPSPL (275 aa)). Residues 17-24 (AHIDAGKT), 81-85 (DTPGH), and 135-138 (NKMD) each bind GTP.

The protein belongs to the TRAFAC class translation factor GTPase superfamily. Classic translation factor GTPase family. EF-G/EF-2 subfamily.

The protein resides in the cytoplasm. Its function is as follows. Catalyzes the GTP-dependent ribosomal translocation step during translation elongation. During this step, the ribosome changes from the pre-translocational (PRE) to the post-translocational (POST) state as the newly formed A-site-bound peptidyl-tRNA and P-site-bound deacylated tRNA move to the P and E sites, respectively. Catalyzes the coordinated movement of the two tRNA molecules, the mRNA and conformational changes in the ribosome. The polypeptide is Elongation factor G (Clostridium botulinum (strain Eklund 17B / Type B)).